Consider the following 428-residue polypeptide: Serine--tRNA ligase (428 aa).

231 to 233 (TAE) contacts L-serine. 262–264 (RSE) is an ATP binding site. Position 285 (Glu285) interacts with L-serine. 349–352 (EISS) provides a ligand contact to ATP. An L-serine-binding site is contributed by Ser385.

It belongs to the class-II aminoacyl-tRNA synthetase family. Type-1 seryl-tRNA synthetase subfamily. As to quaternary structure, homodimer. The tRNA molecule binds across the dimer.

Its subcellular location is the cytoplasm. It catalyses the reaction tRNA(Ser) + L-serine + ATP = L-seryl-tRNA(Ser) + AMP + diphosphate + H(+). The enzyme catalyses tRNA(Sec) + L-serine + ATP = L-seryl-tRNA(Sec) + AMP + diphosphate + H(+). It participates in aminoacyl-tRNA biosynthesis; selenocysteinyl-tRNA(Sec) biosynthesis; L-seryl-tRNA(Sec) from L-serine and tRNA(Sec): step 1/1. In terms of biological role, catalyzes the attachment of serine to tRNA(Ser). Is also able to aminoacylate tRNA(Sec) with serine, to form the misacylated tRNA L-seryl-tRNA(Sec), which will be further converted into selenocysteinyl-tRNA(Sec). This chain is Serine--tRNA ligase, found in Staphylococcus aureus (strain bovine RF122 / ET3-1).